A 1229-amino-acid chain; its full sequence is Nuclear envelope pore membrane protein POM 121C (1229 aa).

Over residues M1 to A10 the composition is skewed to low complexity. The interval M1 to R24 is disordered. Positions M1–S40 are cisternal side. The interval M1–R398 is required for targeting to the nucleus and nuclear pore complex. Residues G11–R24 are compositionally biased toward basic and acidic residues. Residues L41 to G61 traverse the membrane as a helical segment. The segment at T62–K1229 is pore side. S81 bears the Phosphoserine mark. Disordered stretches follow at residues R90–R200, K296–S507, K579–T747, P936–P966, and P1202–K1229. Over residues A155–Q166 the composition is skewed to pro residues. Residues P176 to P189 show a composition bias toward low complexity. Residues S322, S328, S348, S370, and S373 each carry the phosphoserine modification. Residues L374–I400 show a composition bias toward polar residues. Low complexity predominate over residues P409–S422. Composition is skewed to basic and acidic residues over residues R427–H439 and A449–P463. Positions N468–G479 are enriched in polar residues. The segment covering P612–S629 has biased composition (low complexity). The segment covering Q660–P673 has biased composition (polar residues). Low complexity-rich tracts occupy residues S689 to P703 and S726 to T747. Positions L1219 to K1229 are enriched in basic residues.

The protein belongs to the POM121 family.

It localises to the nucleus. Its subcellular location is the nuclear pore complex. The protein localises to the nucleus membrane. It is found in the endoplasmic reticulum membrane. In terms of biological role, essential component of the nuclear pore complex (NPC). The repeat-containing domain may be involved in anchoring components of the pore complex to the pore membrane. When overexpressed in cells induces the formation of cytoplasmic annulate lamellae (AL). The sequence is that of Nuclear envelope pore membrane protein POM 121C (POM121C) from Homo sapiens (Human).